The primary structure comprises 461 residues: MQDSMDDSLREAEGRQDDSEVSSGTTLGSSTPEDSGVTAKLRKKYQMASALLRRELEELSVYDAKTAGVSGRSSGSGSGGLALLGGRFHVAPLRIPARRRLQTLVVAWHTSSFIYMTVLVLFLAANPLMWWFMVPYMVYYVWNRSPANGGVVRRYSPRLRSLALWRYYCEYYPISLHKSEDLAPTFVPDPRGAEPREWKLRLWLWPTRVELLNLTLQWTRARPQVATGPRYIFGYHPHGVGALGAFGAIATEGCNWSKVFAGIPACLCTLVNQFQIPIYRDYLLGLGCTSVARKNVLKVLEQNYSVCIVVGGAQEALLSRVGSTELVLNKRKGFIKLALETGNVNLVPIYAFGETDCFNVLDTGNESYLRKFQLWIKKTYGFTIPFFFARGVFNYDFGFLPFRNPINVVVGKPVYVDKRRTNPTMEEIDHYHDLYVQELRNVFDKNKHKFGYAGKELKIVE.

The disordered stretch occupies residues Met-1–Thr-38. Residues Met-1–Ser-112 lie on the Cytoplasmic side of the membrane. The segment covering Asp-7 to Asp-18 has biased composition (basic and acidic residues). Positions Val-21–Glu-33 are enriched in polar residues. Residues Phe-113 to Met-133 form a helical membrane-spanning segment. Topologically, residues Val-134–Arg-230 are lumenal. A helical transmembrane segment spans residues Tyr-231 to Thr-251. At Glu-252–Lys-258 the chain is on the cytoplasmic side. The chain crosses the membrane as a helical span at residues Val-259–Tyr-279. Over Arg-280–Lys-332 the chain is Lumenal. Residues Gly-333 to Gly-353 form a helical membrane-spanning segment. The Cytoplasmic segment spans residues Glu-354–Glu-461.

This sequence belongs to the diacylglycerol acyltransferase family.

It is found in the lipid droplet. It localises to the endoplasmic reticulum membrane. The catalysed reaction is an acyl-CoA + a 1,2-diacyl-sn-glycerol = a triacyl-sn-glycerol + CoA. The enzyme catalyses a 2-acylglycerol + an acyl-CoA = a 1,2-diacyl-sn-glycerol + CoA. Its pathway is glycerolipid metabolism; triacylglycerol biosynthesis. Functionally, catalyzes the terminal and only committed step in triacylglycerol (TAG) synthesis by using diacylglycerol (DAG) and fatty acyl-CoA as substrates. Required for storage lipid synthesis. Major DAG esterifying enzyme in stationary phase when TAG production is particularly active. Involved in lipid particle synthesis from the endoplasmic reticulum, promoting localized TAG production at discrete ER subdomains. In Eremothecium gossypii (strain ATCC 10895 / CBS 109.51 / FGSC 9923 / NRRL Y-1056) (Yeast), this protein is Diacylglycerol O-acyltransferase 1 (DGA1).